The chain runs to 446 residues: Ribosomal protein uS12 methylthiotransferase RimO (446 aa).

The MTTase N-terminal domain maps to 7 to 118; sequence PKIAFAHLGC…IVEVIERVER (112 aa). 6 residues coordinate [4Fe-4S] cluster: cysteine 16, cysteine 52, cysteine 81, cysteine 156, cysteine 160, and cysteine 163. The Radical SAM core domain occupies 142–371; the sequence is TTPAPVAYLR…MELQQPIAQR (230 aa). The TRAM domain occupies 374 to 440; sequence AAEVGKIVPV…IYDLYGIIPA (67 aa).

Belongs to the methylthiotransferase family. RimO subfamily. It depends on [4Fe-4S] cluster as a cofactor.

Its subcellular location is the cytoplasm. It carries out the reaction L-aspartate(89)-[ribosomal protein uS12]-hydrogen + (sulfur carrier)-SH + AH2 + 2 S-adenosyl-L-methionine = 3-methylsulfanyl-L-aspartate(89)-[ribosomal protein uS12]-hydrogen + (sulfur carrier)-H + 5'-deoxyadenosine + L-methionine + A + S-adenosyl-L-homocysteine + 2 H(+). Functionally, catalyzes the methylthiolation of an aspartic acid residue of ribosomal protein uS12. The polypeptide is Ribosomal protein uS12 methylthiotransferase RimO (Thermosynechococcus vestitus (strain NIES-2133 / IAM M-273 / BP-1)).